The primary structure comprises 209 residues: Neurotrophin-4 (209 aa).

Residues 1–21 (MLPRHSCSLLLFLFLLPSVPM) form the signal peptide. Positions 22–79 (EPHPPSSTLPPFLAPEWDLLSPRVALSRGAPAGPPLLFLLEAGAYGEPAGAPANRSRR) are excised as a propeptide. The N-linked (GlcNAc...) asparagine glycan is linked to Asn75. Intrachain disulfides connect Cys96–Cys169, Cys140–Cys198, and Cys157–Cys200.

Belongs to the NGF-beta family.

Its subcellular location is the secreted. In terms of biological role, target-derived survival factor for peripheral sensory sympathetic neurons. May promote ameloblast differentiation and subsequent reduction in proliferation of ameloblasts. The protein is Neurotrophin-4 (Ntf4) of Mus musculus (Mouse).